Reading from the N-terminus, the 159-residue chain is Lipoprotein LpqH (159 aa).

The signal sequence occupies residues 1–21 (MKRGLTVAVAGAAILVAGLSG). A lipid anchor (N-palmitoyl cysteine) is attached at Cys-22. The S-diacylglycerol cysteine moiety is linked to residue Cys-22. The tract at residues 24 to 51 (SNKSTTGSGETTTAAGTTASPGAASGPK) is disordered. The span at 27-49 (STTGSGETTTAAGTTASPGAASG) shows a compositional bias: low complexity.

It belongs to the mycobacterial 19 kDa antigen family. Modified by Lgt on Cys-22 with an S-linked diacylglycerol with a mixture of C16, C18 and C19 fatty acids, signal peptide is removed by LspA, modifed by Lnt with an amide-linked mixture of C16 and C19 fatty acids.

It localises to the cell membrane. Functionally, might be involved in ligand transport. A host TLR2 agonist, modifies host gene expression in response to pathogen. The sequence is that of Lipoprotein LpqH (lpqH) from Mycobacterium bovis (strain ATCC BAA-935 / AF2122/97).